The sequence spans 383 residues: S-adenosylmethionine synthase (383 aa).

An ATP-binding site is contributed by H15. D17 provides a ligand contact to Mg(2+). K(+) is bound at residue E43. 2 residues coordinate L-methionine: E56 and Q99. Positions 99-109 are flexible loop; sequence QSPDINQGVDR. ATP is bound by residues 164–166, 230–231, D239, 245–246, A262, and K266; these read DAK, RF, and RK. D239 serves as a coordination point for L-methionine. K270 serves as a coordination point for L-methionine.

The protein belongs to the AdoMet synthase family. In terms of assembly, homotetramer; dimer of dimers. The cofactor is Mg(2+). K(+) is required as a cofactor.

The protein resides in the cytoplasm. The enzyme catalyses L-methionine + ATP + H2O = S-adenosyl-L-methionine + phosphate + diphosphate. It participates in amino-acid biosynthesis; S-adenosyl-L-methionine biosynthesis; S-adenosyl-L-methionine from L-methionine: step 1/1. In terms of biological role, catalyzes the formation of S-adenosylmethionine (AdoMet) from methionine and ATP. The overall synthetic reaction is composed of two sequential steps, AdoMet formation and the subsequent tripolyphosphate hydrolysis which occurs prior to release of AdoMet from the enzyme. This chain is S-adenosylmethionine synthase, found in Shewanella baltica (strain OS155 / ATCC BAA-1091).